A 399-amino-acid chain; its full sequence is Dual-specificity RNA methyltransferase RlmN (399 aa).

Glu122 serves as the catalytic Proton acceptor. The region spanning Glu128–Leu371 is the Radical SAM core domain. A disulfide bridge links Cys135 with Cys374. Positions 142, 146, and 149 each coordinate [4Fe-4S] cluster. S-adenosyl-L-methionine contacts are provided by residues Gly200–Glu201, Ser232, Ser254–His256, and Asn331. Cys374 acts as the S-methylcysteine intermediate in catalysis.

It belongs to the radical SAM superfamily. RlmN family. [4Fe-4S] cluster serves as cofactor.

Its subcellular location is the cytoplasm. It carries out the reaction adenosine(2503) in 23S rRNA + 2 reduced [2Fe-2S]-[ferredoxin] + 2 S-adenosyl-L-methionine = 2-methyladenosine(2503) in 23S rRNA + 5'-deoxyadenosine + L-methionine + 2 oxidized [2Fe-2S]-[ferredoxin] + S-adenosyl-L-homocysteine. The enzyme catalyses adenosine(37) in tRNA + 2 reduced [2Fe-2S]-[ferredoxin] + 2 S-adenosyl-L-methionine = 2-methyladenosine(37) in tRNA + 5'-deoxyadenosine + L-methionine + 2 oxidized [2Fe-2S]-[ferredoxin] + S-adenosyl-L-homocysteine. Functionally, specifically methylates position 2 of adenine 2503 in 23S rRNA and position 2 of adenine 37 in tRNAs. m2A2503 modification seems to play a crucial role in the proofreading step occurring at the peptidyl transferase center and thus would serve to optimize ribosomal fidelity. The chain is Dual-specificity RNA methyltransferase RlmN from Rhodopseudomonas palustris (strain BisB18).